Reading from the N-terminus, the 201-residue chain is dITP/XTP pyrophosphatase (201 aa).

Substrate is bound at residue 9-14 (TRNSGK). 2 residues coordinate Mg(2+): Glu-42 and Asp-71. Catalysis depends on Asp-71, which acts as the Proton acceptor. Substrate contacts are provided by residues Ser-72, 156-159 (FGYD), Lys-178, and 183-184 (HR).

This sequence belongs to the HAM1 NTPase family. Homodimer. Mg(2+) is required as a cofactor.

The catalysed reaction is XTP + H2O = XMP + diphosphate + H(+). It carries out the reaction dITP + H2O = dIMP + diphosphate + H(+). The enzyme catalyses ITP + H2O = IMP + diphosphate + H(+). In terms of biological role, pyrophosphatase that catalyzes the hydrolysis of nucleoside triphosphates to their monophosphate derivatives, with a high preference for the non-canonical purine nucleotides XTP (xanthosine triphosphate), dITP (deoxyinosine triphosphate) and ITP. Seems to function as a house-cleaning enzyme that removes non-canonical purine nucleotides from the nucleotide pool, thus preventing their incorporation into DNA/RNA and avoiding chromosomal lesions. This chain is dITP/XTP pyrophosphatase (ynbD), found in Lactococcus lactis subsp. lactis (strain IL1403) (Streptococcus lactis).